The chain runs to 251 residues: uncharacterized protein (251 aa).

The first 18 residues, methionine 1 to alanine 18, serve as a signal peptide directing secretion.

Belongs to the MlaA family.

This is an uncharacterized protein from Rickettsia prowazekii (strain Madrid E).